Consider the following 413-residue polypeptide: Imidazolonepropionase (413 aa).

His-77 and His-79 together coordinate Fe(3+). Residues His-77 and His-79 each contribute to the Zn(2+) site. 4-imidazolone-5-propanoate is bound by residues Arg-86, Tyr-149, and His-182. Tyr-149 is an N-formimidoyl-L-glutamate binding site. Fe(3+) is bound at residue His-247. His-247 provides a ligand contact to Zn(2+). Gln-250 is a binding site for 4-imidazolone-5-propanoate. Asp-322 serves as a coordination point for Fe(3+). Asp-322 lines the Zn(2+) pocket. N-formimidoyl-L-glutamate-binding residues include Asn-324 and Gly-326. A 4-imidazolone-5-propanoate-binding site is contributed by Thr-327.

Belongs to the metallo-dependent hydrolases superfamily. HutI family. The cofactor is Zn(2+). Requires Fe(3+) as cofactor.

Its subcellular location is the cytoplasm. It catalyses the reaction 4-imidazolone-5-propanoate + H2O = N-formimidoyl-L-glutamate. It functions in the pathway amino-acid degradation; L-histidine degradation into L-glutamate; N-formimidoyl-L-glutamate from L-histidine: step 3/3. Catalyzes the hydrolytic cleavage of the carbon-nitrogen bond in imidazolone-5-propanoate to yield N-formimidoyl-L-glutamate. It is the third step in the universal histidine degradation pathway. This chain is Imidazolonepropionase, found in Chromobacterium violaceum (strain ATCC 12472 / DSM 30191 / JCM 1249 / CCUG 213 / NBRC 12614 / NCIMB 9131 / NCTC 9757 / MK).